A 725-amino-acid chain; its full sequence is Threonine--tRNA ligase, cytoplasmic (725 aa).

The TGS domain maps to 80-142; it reads EPIQITLPDG…EGNAKLELLK (63 aa).

Belongs to the class-II aminoacyl-tRNA synthetase family.

Its subcellular location is the cytoplasm. It catalyses the reaction tRNA(Thr) + L-threonine + ATP = L-threonyl-tRNA(Thr) + AMP + diphosphate + H(+). This is Threonine--tRNA ligase, cytoplasmic from Caenorhabditis elegans.